Reading from the N-terminus, the 442-residue chain is Syndecan-3 (442 aa).

2 disordered regions span residues 1-25 and 47-80; these read MKPGPPRRGTAQGQRVDTATHAPGA and RWRNENFERPVDLEGSGDDDSFPDDELDDLYSGS. A signal peptide spans 1 to 44; it reads MKPGPPRRGTAQGQRVDTATHAPGARGLLLPPLLLLLLAGRAAG. The Extracellular portion of the chain corresponds to 45 to 387; the sequence is AQRWRNENFE…SILERKEVLV (343 aa). Positions 48–58 are enriched in basic and acidic residues; sequence WRNENFERPVD. The segment covering 61-75 has biased composition (acidic residues); that stretch reads GSGDDDSFPDDELDD. 4 O-linked (Xyl...) (glycosaminoglycan) serine glycosylation sites follow: Ser-78, Ser-80, Ser-82, and Ser-89. Thr-107 carries an O-linked (GalNAc) threonine; by GALNT13 glycan. 3 disordered regions span residues 152 to 199, 253 to 293, and 305 to 327; these read ESSQ…PATA, ATSR…AQTP, and EPEVPVSGGPSGDFELQEETTQP. Low complexity-rich tracts occupy residues 157 to 199 and 276 to 287; these read ATTI…PATA and TLPLGTTAPGPT. The O-linked (GalNAc) serine; by GALNT13 glycan is linked to Ser-161. O-linked (GalNAc) threonine; by GALNT13 glycans are attached at residues Thr-162, Thr-163, Thr-170, and Thr-172. 2 O-linked (Xyl...) (glycosaminoglycan) serine glycosylation sites follow: Ser-315 and Ser-367. A helical membrane pass occupies residues 388–408; that stretch reads AVIVGGVVGALFAAFLVTLLI. Residues Tyr-409, Tyr-419, Tyr-431, and Tyr-441 each carry the phosphotyrosine modification. The Cytoplasmic portion of the chain corresponds to 409-442; sequence YRMKKKDEGSYTLEEPKQASVTYQKPDKQEEFYA. A disordered region spans residues 419–442; that stretch reads YTLEEPKQASVTYQKPDKQEEFYA. Over residues 433–442 the composition is skewed to basic and acidic residues; sequence KPDKQEEFYA.

It belongs to the syndecan proteoglycan family. As to quaternary structure, interacts with TIAM1. Interacts with PTN (via heparan sulfate chains); this interaction mediates the neurite outgrowth-promoting signal from PTN to the cytoskeleton of growing neurites; this interaction mediates osteoblast recruitment. Interacts with MDK; this interaction induces SDC3 clustering; this interaction induces neuronal cell adhesion and neurite outgrowth. In terms of processing, O-glycosylated within the Thr/Ser-rich region which could interact with lectin domains on other molecules.

The protein resides in the cell membrane. Functionally, cell surface proteoglycan that may bear heparan sulfate. May have a role in the organization of cell shape by affecting the actin cytoskeleton, possibly by transferring signals from the cell surface in a sugar-dependent mechanism. The sequence is that of Syndecan-3 (Sdc3) from Mus musculus (Mouse).